The chain runs to 209 residues: Mitochondrial import inner membrane translocase subunit Tim23 (209 aa).

A run of 3 helical transmembrane segments spans residues 73–93, 125–145, and 172–194; these read FELA…FGAM, ALWA…GVII, and GGLR…YALY.

Belongs to the Tim17/Tim22/Tim23 family. In terms of assembly, component of the TIM23 complex at least composed of TIMM23, TIMM17 (TIMM17A or TIMM17B) and TIMM50; within this complex, directly interacts with TIMM50. The complex interacts with the TIMM44 component of the PAM complex and with DNAJC15. Upon mitochondrial depolarization, interacts with PINK1; the interaction is required for PINK1 accumulation at the outer mitochondrial membrane, kinase activation by autophosphorylation and PRKN recruitement to mitochondria.

It localises to the mitochondrion inner membrane. In terms of biological role, essential component of the TIM23 complex, a complex that mediates the translocation of transit peptide-containing proteins across the mitochondrial inner membrane. Has a role in the activation of stress-induced mitophagy by protecting PINK1 from OMA1-mediated degradation and facilitating its accumulation at the outer mitochondrial membrane in response to depolarization. This Pongo abelii (Sumatran orangutan) protein is Mitochondrial import inner membrane translocase subunit Tim23 (TIMM23).